The chain runs to 928 residues: MDVGFSRTTVQTLSRSHCKNIKQKISQWEGRANGISNPEKWCPKDFGVRYNCHQEIRLKKNPIAERKSKNLDVTSRENVGLDINENTKSHDQSENENKKHEYDDTHFFKNESESNWVCSRVKEIESCKEDVLDPETSLPPGNFYTSQILWKKIEALPPDKLLNLALEHCDSSEKELNFRVLDSSYGITKSLENIYSEPEGQECGPSINPLPKPRRTFRYLSESGVTPYKERNCDKKYCENNSCAQSSLASSQEPEPKKYGGKIRGRSKRKSFEFEDIQHFRNRNSQTIREELGRNSGSALYYTQSEDNIYEDIIYPTKENPYEDIPVQPLPMWRSPSAWKLPPAKSAFKAPKLPPKPQFLHRKTMEVKNSQAYLRSKLTKDTTLPVTLTEWKLFRAGEVANTKRKNLPRLVLKIDDIFESKRGKKKVKLHSYTGKELPPTKGETSGNESDAEYLPKNRHKRLAQLQPSSKRNPHYQTLERDLIELQEQQLFELFVVVSLQKKPSGISYIPQVIQQFPGKDDHGYKQSKDMEERLKVIPKFCFPDSKDWMPTSELKSETFSFVLTGEDGSRWFGYCKKLLPVGKGKRLPEVYCMVSRLGCFNLFSKILDEVEKRREMSPALVYPFMRSVMEAPFPAPGRTITVKSYLPGAGDESIELCRPLDSRLEHVDFKCLFKCLSVCHLIRVCASLLLERRVIFVANSLSTLSKCGHAVVATLYPFTWQHTYIPVLPASMIDIVCSPTPFLIGILSCSLPQLQDLPIEEVLIVDLCADKFLQEVSDEDEILPPKLQAALMQILEERNEILTQEQNFSQDVTLNSLVSEAFVRFFVELVGHYSLNMTVTERGERVFQREPFRKSHTSRSVRHFLDLFMETQMFAGFIQDRELRKSGVKGLFEIRAIQYLETIPESEPSGMNRILRSLGSKMKFLQKK.

Disordered stretches follow at residues 67–105 (KSKNLDVTSRENVGLDINENTKSHDQSENENKKHEYDDT) and 245–266 (QSSLASSQEPEPKKYGGKIRGR). Residues 85-105 (ENTKSHDQSENENKKHEYDDT) are compositionally biased toward basic and acidic residues. Ser-271 is subject to Phosphoserine. The interval 428-456 (KLHSYTGKELPPTKGETSGNESDAEYLPK) is disordered. The 150-residue stretch at 492–641 (ELFVVVSLQK…PFPAPGRTIT (150 aa)) folds into the uDENN domain. Residues 663-796 (RLEHVDFKCL…LQAALMQILE (134 aa)) enclose the cDENN domain. The 91-residue stretch at 798-888 (RNEILTQEQN…QDRELRKSGV (91 aa)) folds into the dDENN domain.

In terms of biological role, guanine nucleotide exchange factor (GEF) which may activate RAB9A and RAB9B. Promotes the exchange of GDP to GTP, converting inactive GDP-bound Rab proteins into their active GTP-bound form. The sequence is that of DENN domain-containing protein 2C (DENND2C) from Homo sapiens (Human).